A 92-amino-acid chain; its full sequence is UPF0213 protein M28_Spy1146 (92 aa).

The GIY-YIG domain maps to 4–80 (KKAYMYVLEC…KRKTRSQKLA (77 aa)).

The protein belongs to the UPF0213 family.

The protein is UPF0213 protein M28_Spy1146 of Streptococcus pyogenes serotype M28 (strain MGAS6180).